The following is a 177-amino-acid chain: uncharacterized protein (177 aa).

A disordered region spans residues Met1–Gly27.

This is an uncharacterized protein from Homo sapiens (Human).